Reading from the N-terminus, the 386-residue chain is Chaperone protein DnaJ (386 aa).

Residues 6–70 (DYYEVLGVDK…QKRAAYDQYG (65 aa)) enclose the J domain. The CR-type zinc-finger motif lies at 141–223 (GKDTEVSYKR…CHGTGHEKKT (83 aa)). Zn(2+) is bound by residues cysteine 154, cysteine 157, cysteine 171, cysteine 174, cysteine 197, cysteine 200, cysteine 211, and cysteine 214. 4 CXXCXGXG motif repeats span residues 154–161 (CHTCGGNG), 171–178 (CHKCKGSG), 197–204 (CDVCHGTG), and 211–218 (CETCHGTG). The disordered stretch occupies residues 363 to 386 (LTGQSTEEQQSEGFFDKMKDAFKK). The span at 364-374 (TGQSTEEQQSE) shows a compositional bias: polar residues. Basic and acidic residues predominate over residues 376–386 (FFDKMKDAFKK).

The protein belongs to the DnaJ family. Homodimer. It depends on Zn(2+) as a cofactor.

Its subcellular location is the cytoplasm. In terms of biological role, participates actively in the response to hyperosmotic and heat shock by preventing the aggregation of stress-denatured proteins and by disaggregating proteins, also in an autonomous, DnaK-independent fashion. Unfolded proteins bind initially to DnaJ; upon interaction with the DnaJ-bound protein, DnaK hydrolyzes its bound ATP, resulting in the formation of a stable complex. GrpE releases ADP from DnaK; ATP binding to DnaK triggers the release of the substrate protein, thus completing the reaction cycle. Several rounds of ATP-dependent interactions between DnaJ, DnaK and GrpE are required for fully efficient folding. Also involved, together with DnaK and GrpE, in the DNA replication of plasmids through activation of initiation proteins. The sequence is that of Chaperone protein DnaJ from Tetragenococcus halophilus (Pediococcus halophilus).